Here is a 235-residue protein sequence, read N- to C-terminus: Sperm annulus positionning complex subunit Chibby3 (235 aa).

Residues 1-41 (MADSKMKWGQAWDSSLGTATTSSSSATGSPSPFQNIRVPDT) form a disordered region. Low complexity predominate over residues 14–32 (SSLGTATTSSSSATGSPSP). The leucine-zipper; mediates homodimerization stretch occupies residues 167–181 (LLEENNYLKLQQELL).

This sequence belongs to the chibby family. As to quaternary structure, homodimer. Interacts with CIBAR1 (via BAR-like domain); both proteins form a ninefold symmetric structure at the flagellar base; are recruited to the annulus in a mutually dependent manner and regulate annulus positionning. Testis-specific.

The protein resides in the cell projection. Its subcellular location is the cilium. The protein localises to the flagellum. Plays a key role in the correct positioning of the annulus, a septin-based ring strucure in the sperm flagellum, serving both as a physical barrier and a membrane diffusion barrier that separates the midpiece (MP) from the principal piece (PP). This positioning is essential for proper sperm motility and function. Interacts with CIBAR1 to form a complex which localizes to the curved membrane region of the flagellar pocket. By doing so, may provide stability and rigidity to the periannular membrane to prevent membrane deformation. This function is crucial for halting annulus migration at the proximal end of the fibrous sheath-containing PP. This Mus musculus (Mouse) protein is Sperm annulus positionning complex subunit Chibby3 (Cby3).